The primary structure comprises 308 residues: Glycine-rich protein GRP33 (308 aa).

The KH domain occupies 83-118 (DQFPKYNFLGKLLGPGGSTMKQLQDETMTKISILGR). Gly residues-rich tracts occupy residues 203-220 (GPMG…GGFS) and 273-294 (RGAG…GGGK). 2 disordered regions span residues 203 to 222 (GPMG…FSGP) and 270 to 308 (SPGR…AAPY).

Post-translationally, the arginines in the Gly-rich domain might be methylated.

The polypeptide is Glycine-rich protein GRP33 (Artemia salina (Brine shrimp)).